A 350-amino-acid chain; its full sequence is Anthranilate phosphoribosyltransferase (350 aa).

Residues glycine 94, 97–98, threonine 102, 104–107, 122–130, and serine 134 each bind 5-phospho-alpha-D-ribose 1-diphosphate; these read GD, NVST, and KHGNRSVSS. Glycine 94 is a binding site for anthranilate. Serine 106 contacts Mg(2+). Position 125 (asparagine 125) interacts with anthranilate. Arginine 180 is an anthranilate binding site. Mg(2+)-binding residues include aspartate 239 and glutamate 240.

The protein belongs to the anthranilate phosphoribosyltransferase family. Homodimer. The cofactor is Mg(2+).

It catalyses the reaction N-(5-phospho-beta-D-ribosyl)anthranilate + diphosphate = 5-phospho-alpha-D-ribose 1-diphosphate + anthranilate. Its pathway is amino-acid biosynthesis; L-tryptophan biosynthesis; L-tryptophan from chorismate: step 2/5. In terms of biological role, catalyzes the transfer of the phosphoribosyl group of 5-phosphorylribose-1-pyrophosphate (PRPP) to anthranilate to yield N-(5'-phosphoribosyl)-anthranilate (PRA). This chain is Anthranilate phosphoribosyltransferase, found in Pelobacter propionicus (strain DSM 2379 / NBRC 103807 / OttBd1).